The sequence spans 105 residues: Large ribosomal subunit protein uL24 (105 aa).

The protein belongs to the universal ribosomal protein uL24 family. As to quaternary structure, part of the 50S ribosomal subunit.

Functionally, one of two assembly initiator proteins, it binds directly to the 5'-end of the 23S rRNA, where it nucleates assembly of the 50S subunit. Its function is as follows. One of the proteins that surrounds the polypeptide exit tunnel on the outside of the subunit. The protein is Large ribosomal subunit protein uL24 of Staphylococcus carnosus (strain TM300).